Consider the following 342-residue polypeptide: S-adenosyl-L-methionine-dependent tRNA 4-demethylwyosine synthase (342 aa).

Cysteine 45, cysteine 58, cysteine 71, cysteine 81, cysteine 85, and cysteine 88 together coordinate [4Fe-4S] cluster. Positions 64-312 (YGIHSHRCLQ…VKHLPGYHIE (249 aa)) constitute a Radical SAM core domain.

The protein belongs to the TYW1 family. As to quaternary structure, monomer. The cofactor is [4Fe-4S] cluster.

It localises to the cytoplasm. It carries out the reaction N(1)-methylguanosine(37) in tRNA(Phe) + pyruvate + S-adenosyl-L-methionine = 4-demethylwyosine(37) in tRNA(Phe) + 5'-deoxyadenosine + L-methionine + CO2 + H2O. Its function is as follows. Component of the wyosine derivatives biosynthesis pathway that catalyzes the condensation of N-methylguanine with 2 carbon atoms from pyruvate to form the tricyclic 4-demethylwyosine (imG-14) on guanosine-37 of tRNA(Phe). The protein is S-adenosyl-L-methionine-dependent tRNA 4-demethylwyosine synthase of Pyrococcus abyssi (strain GE5 / Orsay).